The sequence spans 943 residues: Lysine-specific demethylase JMJ21 (943 aa).

Residues 14 to 60 enclose the F-box domain; sequence LGSLSVLPDETICVLLEYLAPRDIAHLACVSSVMYILCNEEPLWMSL. In terms of domain architecture, JmjC spans 216–379; the sequence is EAAPELLKDY…FVCLDMAPGY (164 aa). The Fe cation site is built by H262, D264, and H347. Residues 396–410 are compositionally biased toward acidic residues; it reads NSEDLEEETHDEEDN. A disordered region spans residues 396-438; it reads NSEDLEEETHDEEDNTLSYSDLTRKEKRTRMNGGGETENREED.

The protein belongs to the JARID1 histone demethylase family. It depends on Fe(2+) as a cofactor. Mostly expressed in leaves, and, to a lower extent, in inflorescences, roots, siliques and stems.

Its subcellular location is the nucleus. In terms of biological role, may function as histone H3 lysine demethylase and be involved in regulation of gene expression. This chain is Lysine-specific demethylase JMJ21, found in Arabidopsis thaliana (Mouse-ear cress).